The following is a 263-amino-acid chain: Glutamate 5-kinase (263 aa).

Residue Lys-14 participates in ATP binding. Substrate contacts are provided by Ser-52, Asp-137, and Asn-149. ATP is bound by residues 169 to 170 (SD) and 211 to 217 (TGGIVTK).

It belongs to the glutamate 5-kinase family. Homotetramer; oligomerization is not affected by L-proline feedback inhibition. It depends on Mg(2+) as a cofactor.

The catalysed reaction is L-glutamate + ATP = L-glutamyl 5-phosphate + ADP. Its pathway is amino-acid biosynthesis; L-proline biosynthesis; L-glutamate 5-semialdehyde from L-glutamate: step 1/2. Its activity is regulated as follows. Inhibited by L-proline as part of a negative feedback loop. Also inhibited by L-proline analogs 3,4-dehydro-L-proline, L-azetidine-2-carboxylic acid and L-4-thiazolidine carboxylic acid. In terms of biological role, catalyzes the transfer of a phosphate group to glutamate to form L-glutamate 5-phosphate. May be important for growth and survival. The protein is Glutamate 5-kinase of Leishmania donovani.